Consider the following 352-residue polypeptide: tRNA-specific 2-thiouridylase MnmA (352 aa).

ATP is bound by residues 11-18 and Met37; that span reads AMSGGVDS. Residue Cys101 is the Nucleophile of the active site. A disulfide bridge connects residues Cys101 and Cys197. Gly125 lines the ATP pocket. The interval 147-149 is interaction with tRNA; sequence KDQ. Cys197 (cysteine persulfide intermediate) is an active-site residue. The segment at 302 to 303 is interaction with tRNA; it reads RY.

It belongs to the MnmA/TRMU family.

It localises to the cytoplasm. The catalysed reaction is S-sulfanyl-L-cysteinyl-[protein] + uridine(34) in tRNA + AH2 + ATP = 2-thiouridine(34) in tRNA + L-cysteinyl-[protein] + A + AMP + diphosphate + H(+). Catalyzes the 2-thiolation of uridine at the wobble position (U34) of tRNA, leading to the formation of s(2)U34. The chain is tRNA-specific 2-thiouridylase MnmA from Syntrophotalea carbinolica (strain DSM 2380 / NBRC 103641 / GraBd1) (Pelobacter carbinolicus).